The primary structure comprises 626 residues: Division abnormally delayed protein (626 aa).

The first 26 residues, 1–26, serve as a signal peptide directing secretion; it reads MAARSVRLAQLLLFTLLCGFVGLSAA. Basic residues predominate over residues 41–52; it reads LHSATTHHRRRL. The interval 41–65 is disordered; the sequence is LHSATTHHRRRLQRDSRAKDAVGGS. Asn-97 carries an N-linked (GlcNAc...) asparagine; atypical glycan. Asn-101, Asn-150, and Asn-187 each carry an N-linked (GlcNAc...) asparagine glycan. Residues 533–607 form a disordered region; sequence NSIQATHDIQ…GKTSGSNPLE (75 aa). O-linked (Xyl...) (heparan sulfate) serine glycosylation is found at Ser-549, Ser-569, Ser-573, and Ser-601. Positions 565–575 are enriched in gly residues; it reads GAHGSGDGSGD. A lipid anchor (GPI-anchor amidated glycine) is attached at Gly-602. Positions 603 to 626 are cleaved as a propeptide — removed in mature form; it reads SNPLEGTATWMLLTLVTMLFSSCS.

This sequence belongs to the glypican family. As to quaternary structure, interacts with nord; the interaction promotes dally degradation. Interacts with Magu. As part of the dally/ Magu complex, associates with fwe (isoforms ubi, LoseA and LoseB) and is unable to interact with fwe independently of Magu.

It localises to the cell membrane. Its function is as follows. Cell surface proteoglycan that bears heparan sulfate. Functions as a coreceptor for growth factors and morphogens, such as the products of dpp, to regulate signaling and distribution of these ligands. Required for cell division patterning during postembryonic development of the nervous system. Plays a role in dpp/BMP signaling possibly by stabilizing dpp and thereby creating a morphological gradient during wing development. Might have a role in testis development. Functions with magu and fwe in a mechanism of scaling, which utilises apoptosis to ensure that the dpp patterning gradient remains proportional to the size of the growing wing. In this mechanism, fwe represses dally and Magu-dependent activity in expanding the gradient, and dally/Magu inhibits fwe-dependent apoptosis to keep cell death rate low. When the levels of these different proteins are optimally regulated the gradient correctly scales with organ growth but when this fails, fwe-mediated apoptosis is activated to trim the developing tissue to match the correct size of the gradient. This Drosophila melanogaster (Fruit fly) protein is Division abnormally delayed protein (dally).